Reading from the N-terminus, the 539-residue chain is 3-methylmercaptopropionyl-CoA ligase (539 aa).

T185 lines the Mg(2+) pocket. Residues H231, G303, H324, A325, and S329 each contribute to the ATP site. E330 lines the Mg(2+) pocket. Q359, D417, R432, and K523 together coordinate ATP.

Belongs to the ATP-dependent AMP-binding enzyme family. Homodimer. It depends on Mg(2+) as a cofactor.

The catalysed reaction is 3-(methylsulfanyl)propanoate + ATP + CoA = 3-(methylsulfanyl)propanoyl-CoA + AMP + diphosphate. Its pathway is lipid metabolism; fatty acid metabolism. With respect to regulation, activated by LiCl and NH(4)Cl. Inhibited by dimethylsulfoniopropionate (DMSP). MMPA concentrations above 2 mM relieve the DMSP inhibition and 80% of activity is regained at an MMPA concentration of 8 mM. Involved in the assimilation of dimethylsulphoniopropionate (DMSP), an important compound in the fixation of carbon in marine phytoplankton. Catalyzes the ATP-dependent ligation of methylmercaptopropionate (MMPA) and CoA to yield methylmercaptopropionate-CoA (MMPA-CoA). It is also active with short-chain-fatty-acid (carboxylic acids up to six carbons in length). This is 3-methylmercaptopropionyl-CoA ligase from Ruegeria pomeroyi (strain ATCC 700808 / DSM 15171 / DSS-3) (Silicibacter pomeroyi).